A 278-amino-acid chain; its full sequence is HTH-type transcriptional regulator HdfR (278 aa).

One can recognise an HTH lysR-type domain in the interval 1–58; sequence MDTELLKTFLEVSRTRHFGRAAEALYLTQSAVSFRIRQLENQLGVNLFTRHRNNIRLT. The segment at residues 18–37 is a DNA-binding region (H-T-H motif); sequence FGRAAEALYLTQSAVSFRIR.

The protein belongs to the LysR transcriptional regulatory family.

Functionally, negatively regulates the transcription of the flagellar master operon flhDC by binding to the upstream region of the operon. The polypeptide is HTH-type transcriptional regulator HdfR (Salmonella schwarzengrund (strain CVM19633)).